The chain runs to 97 residues: Gibberellin-regulated protein 5 (97 aa).

Positions 1 to 27 (MANCIRRNALFFLTLLFLLSVSNLVQA) are cleaved as a signal peptide.

Belongs to the GASA family. In terms of processing, six disulfide bonds may be present. As to expression, expressed in roots, root hairs, vasculature of cotyledons and hypocotyls, shoot apex, leaf veins, stems, flower receptacles, pollen, filaments, anthers and siliques.

The protein localises to the secreted. The protein resides in the cell wall. It localises to the extracellular space. It is found in the extracellular matrix. Its function is as follows. Gibberellin-regulated protein that acts as a negative regulator of gibberellin-induced flowering and stem growth. May inhibit flowering and inflorescence growth via a pathway involving GAI and by enhancing FLC expression and repressing FT and LFY. Acts as a negative regulator in thermotolerance by resogulating both salicylic acid (SA) signaling and heat shock-protein accumulation. This is Gibberellin-regulated protein 5 (GASA5) from Arabidopsis thaliana (Mouse-ear cress).